The primary structure comprises 207 residues: LexA repressor (207 aa).

Positions 28 to 48 (VREIGEAVGLASSSTVHGHLA) form a DNA-binding region, H-T-H motif. Catalysis depends on for autocatalytic cleavage activity residues serine 129 and lysine 167.

It belongs to the peptidase S24 family. In terms of assembly, homodimer.

It catalyses the reaction Hydrolysis of Ala-|-Gly bond in repressor LexA.. Its function is as follows. Represses a number of genes involved in the response to DNA damage (SOS response), including recA and lexA. In the presence of single-stranded DNA, RecA interacts with LexA causing an autocatalytic cleavage which disrupts the DNA-binding part of LexA, leading to derepression of the SOS regulon and eventually DNA repair. The polypeptide is LexA repressor (Geobacillus kaustophilus (strain HTA426)).